The sequence spans 246 residues: Chloroplastic group IIB intron splicing facilitator CRS2-A, chloroplastic (246 aa).

A chloroplast-targeting transit peptide spans 1-34 (MFCASSSPITSPLYPKAYKFSQTKSNSKRFSSLR). Position 64 (Y64) interacts with tRNA. The active-site Proton acceptor is H69. Y114, N116, and N162 together coordinate tRNA.

It belongs to the PTH family. CRS2 subfamily. Part of large ribonucleo-protein complexes that include group IIB introns and either CAF1 or CAF2.

Its subcellular location is the plastid. The protein resides in the chloroplast stroma. Required for the splicing of group IIB introns in chloroplasts. This Arabidopsis thaliana (Mouse-ear cress) protein is Chloroplastic group IIB intron splicing facilitator CRS2-A, chloroplastic (CRS2A).